Here is a 243-residue protein sequence, read N- to C-terminus: MIQLQKPRLILDNGLRLDGRKPDEMRPIKIELGVLKNADGSAIFEMGNTKVIAAVYGPKEMHPRHLALPDRAVLRVRYHMTPFSTDERKNPAPSRREIELSKVIREALESTILVELFPRTVIDVFMEVLQADAGTRLVSLMAASMALADAGIPMRDLIAGVAVGKADGVLVLDLNEPEDMWGEADMPVAMMPSLKQVALLQLNGNMTPQEFRQALEMAQKGIETIYNLEKEAIRSKYAELKEE.

Belongs to the RNase PH family. Rrp41 subfamily. As to quaternary structure, component of the archaeal exosome complex. Forms a hexameric ring-like arrangement composed of 3 Rrp41-Rrp42 heterodimers. The hexameric ring associates with a trimer of Rrp4 and/or Csl4 subunits.

It localises to the cytoplasm. In terms of biological role, catalytic component of the exosome, which is a complex involved in RNA degradation. Has 3'-&gt;5' exoribonuclease activity. Can also synthesize heteromeric RNA-tails. This Sulfurisphaera tokodaii (strain DSM 16993 / JCM 10545 / NBRC 100140 / 7) (Sulfolobus tokodaii) protein is Exosome complex component Rrp41.